Here is a 421-residue protein sequence, read N- to C-terminus: Pyridinium-3,5-bisthiocarboxylic acid mononucleotide nickel insertion protein (421 aa).

This sequence belongs to the LarC family.

The catalysed reaction is Ni(II)-pyridinium-3,5-bisthiocarboxylate mononucleotide = pyridinium-3,5-bisthiocarboxylate mononucleotide + Ni(2+). In terms of biological role, involved in the biosynthesis of a nickel-pincer cofactor ((SCS)Ni(II) pincer complex). Binds Ni(2+), and functions in nickel delivery to pyridinium-3,5-bisthiocarboxylic acid mononucleotide (P2TMN), to form the mature cofactor. Is thus probably required for the activation of nickel-pincer cofactor-dependent enzymes. This Alkaliphilus metalliredigens (strain QYMF) protein is Pyridinium-3,5-bisthiocarboxylic acid mononucleotide nickel insertion protein.